We begin with the raw amino-acid sequence, 331 residues long: GTPase Obg (331 aa).

In terms of domain architecture, Obg spans 1–159; sequence MHFIDEVKIY…MWIHLRLKLL (159 aa). Residues 160–327 enclose the OBG-type G domain; that stretch reads SDVGLIGLPN…IVKLALEIIK (168 aa). Residues 166 to 173, 191 to 195, 212 to 215, 279 to 282, and 308 to 310 each bind GTP; these read GLPNAGKS, FTTLV, DIPG, NKCD, and STY. Residues serine 173 and threonine 193 each contribute to the Mg(2+) site.

The protein belongs to the TRAFAC class OBG-HflX-like GTPase superfamily. OBG GTPase family. As to quaternary structure, monomer. Requires Mg(2+) as cofactor.

It is found in the cytoplasm. Its function is as follows. An essential GTPase which binds GTP, GDP and possibly (p)ppGpp with moderate affinity, with high nucleotide exchange rates and a fairly low GTP hydrolysis rate. Plays a role in control of the cell cycle, stress response, ribosome biogenesis and in those bacteria that undergo differentiation, in morphogenesis control. In Rickettsia prowazekii (strain Madrid E), this protein is GTPase Obg.